The chain runs to 332 residues: MIEVPPFWCPLPIAIHPAADQAEKDARAWAERYGVRLRIADQVQPGRLGAYWAPHGTYEGMLAVGCWNFWAFAFDDHLDEPLPLDVPVTTSLVQQAVDIPSPPITDDPWAAGAQAVFNMFRDLATPTQVRYCADNHRRWLHGACWRHSNHVNRRLPPLAEYIPLRMQDAAAQATCLIAVLIGSDISVPEQEMDSPRVRALLETASWTATIDSDLHSFQLEDTQRPVSQHIVSVLMHERGIGVDEALRQSVALRDRFMTRFLHLQQECARTGSSELARFAHTLGYVISGYLQWAVDTSRYGQTEATFSFTDTPRDDTPEPPPGIPSVEWLWTL.

The Mg(2+) site is built by D75 and E80. A DDXXXE motif motif is present at residues D75 to E80. R165 is a binding site for substrate. The Mg(2+) site is built by S212, S216, and E220. The short motif at S212–E220 is the SXXXSXXXE motif element. R298–Y299 provides a ligand contact to substrate.

Belongs to the terpene synthase family. Requires Mg(2+) as cofactor.

It catalyses the reaction (2E,6E,10E)-geranylgeranyl diphosphate = tsukubadiene + diphosphate. Its function is as follows. Catalyzes the formation of the 5-9-5 ring skeleton (3S,6S,11R,14S)-tsukubadiene from geranylgeranyl diphosphate (GGPP) via a 1,11-cyclization and a 10Re,14Re-cyclization. The sequence is that of Tsukubadiene synthase from Streptomyces tsukubensis (strain DSM 42081 / NBRC 108919 / NRRL 18488 / 9993).